The primary structure comprises 218 residues: MNAPSRPHLPRGPYLLCDDSVLPEISLVDKAARLVAGGARLVQLRMKRTPIREALAATRQVVALCRREGALCLVNDRVDLALLADADGVHVGDEDVPAEDARALLGPGRLVGVTVRDVVGARAAQAAGADYVGLGPVFPTSTKQVPAPVLGLEAFASVVRDSPLPVVGIGGVGLVNIASVAAAGAHCAAVVSDALLAADITERVRRLVEAFEQGRFGA.

4-amino-2-methyl-5-(diphosphooxymethyl)pyrimidine is bound by residues 43 to 47 (QLRMK) and N75. 2 residues coordinate Mg(2+): D76 and D95. T114 serves as a coordination point for 4-amino-2-methyl-5-(diphosphooxymethyl)pyrimidine. 140 to 142 (TST) serves as a coordination point for 2-[(2R,5Z)-2-carboxy-4-methylthiazol-5(2H)-ylidene]ethyl phosphate. K143 serves as a coordination point for 4-amino-2-methyl-5-(diphosphooxymethyl)pyrimidine. 2-[(2R,5Z)-2-carboxy-4-methylthiazol-5(2H)-ylidene]ethyl phosphate-binding positions include G171 and 191–192 (VS).

The protein belongs to the thiamine-phosphate synthase family. It depends on Mg(2+) as a cofactor.

It carries out the reaction 2-[(2R,5Z)-2-carboxy-4-methylthiazol-5(2H)-ylidene]ethyl phosphate + 4-amino-2-methyl-5-(diphosphooxymethyl)pyrimidine + 2 H(+) = thiamine phosphate + CO2 + diphosphate. The catalysed reaction is 2-(2-carboxy-4-methylthiazol-5-yl)ethyl phosphate + 4-amino-2-methyl-5-(diphosphooxymethyl)pyrimidine + 2 H(+) = thiamine phosphate + CO2 + diphosphate. The enzyme catalyses 4-methyl-5-(2-phosphooxyethyl)-thiazole + 4-amino-2-methyl-5-(diphosphooxymethyl)pyrimidine + H(+) = thiamine phosphate + diphosphate. Its pathway is cofactor biosynthesis; thiamine diphosphate biosynthesis; thiamine phosphate from 4-amino-2-methyl-5-diphosphomethylpyrimidine and 4-methyl-5-(2-phosphoethyl)-thiazole: step 1/1. Condenses 4-methyl-5-(beta-hydroxyethyl)thiazole monophosphate (THZ-P) and 2-methyl-4-amino-5-hydroxymethyl pyrimidine pyrophosphate (HMP-PP) to form thiamine monophosphate (TMP). This is Thiamine-phosphate synthase from Myxococcus xanthus (strain DK1622).